The following is a 288-amino-acid chain: Release factor glutamine methyltransferase (288 aa).

S-adenosyl-L-methionine is bound by residues 123–127 (GTGSG), aspartate 146, and asparagine 190. 190–193 (NPPY) is a substrate binding site.

This sequence belongs to the protein N5-glutamine methyltransferase family. PrmC subfamily.

It carries out the reaction L-glutaminyl-[peptide chain release factor] + S-adenosyl-L-methionine = N(5)-methyl-L-glutaminyl-[peptide chain release factor] + S-adenosyl-L-homocysteine + H(+). In terms of biological role, methylates the class 1 translation termination release factors RF1/PrfA and RF2/PrfB on the glutamine residue of the universally conserved GGQ motif. The polypeptide is Release factor glutamine methyltransferase (Bacillus subtilis (strain 168)).